A 428-amino-acid chain; its full sequence is Adenylosuccinate synthetase (428 aa).

GTP contacts are provided by residues 11 to 17 (GDEGKGK) and 39 to 41 (GHT). Asp12 (proton acceptor) is an active-site residue. Positions 12 and 39 each coordinate Mg(2+). Residues 12–15 (DEGK), 37–40 (NAGH), Thr130, Arg144, Asn226, Thr241, and Arg305 contribute to the IMP site. Catalysis depends on His40, which acts as the Proton donor. 301–307 (VTTGRKR) provides a ligand contact to substrate. GTP contacts are provided by residues Arg307, 333-335 (KLD), and 415-417 (GTG).

It belongs to the adenylosuccinate synthetase family. In terms of assembly, homodimer. Mg(2+) is required as a cofactor.

It localises to the cytoplasm. It carries out the reaction IMP + L-aspartate + GTP = N(6)-(1,2-dicarboxyethyl)-AMP + GDP + phosphate + 2 H(+). It participates in purine metabolism; AMP biosynthesis via de novo pathway; AMP from IMP: step 1/2. Functionally, plays an important role in the de novo pathway and in the salvage pathway of purine nucleotide biosynthesis. Catalyzes the first committed step in the biosynthesis of AMP from IMP. This Candida dubliniensis (strain CD36 / ATCC MYA-646 / CBS 7987 / NCPF 3949 / NRRL Y-17841) (Yeast) protein is Adenylosuccinate synthetase.